A 125-amino-acid chain; its full sequence is Holo-[acyl-carrier-protein] synthase (125 aa).

The Mg(2+) site is built by E9 and Q58.

The protein belongs to the P-Pant transferase superfamily. AcpS family. Requires Mg(2+) as cofactor.

It is found in the cytoplasm. It catalyses the reaction apo-[ACP] + CoA = holo-[ACP] + adenosine 3',5'-bisphosphate + H(+). Transfers the 4'-phosphopantetheine moiety from coenzyme A to a Ser of acyl-carrier-protein. This is Holo-[acyl-carrier-protein] synthase from Rhodopirellula baltica (strain DSM 10527 / NCIMB 13988 / SH1).